A 979-amino-acid chain; its full sequence is Mast/stem cell growth factor receptor Kit (979 aa).

An N-terminal signal peptide occupies residues 1–24; the sequence is MRGARGAWDLLCVLLVLLRGQTAT. Residues 25–527 lie on the Extracellular side of the membrane; that stretch reads SQPSASPGEP…QIQAHTLFTP (503 aa). Ig-like C2-type domains are found at residues 31–117, 126–210, and 217–315; these read PGEP…DPAK, FGKE…AAIK, and VPET…EKGF. 4 disulfides stabilise this stretch: cysteine 58/cysteine 98, cysteine 137/cysteine 187, cysteine 152/cysteine 184, and cysteine 234/cysteine 293. Asparagine 146 is a glycosylation site (N-linked (GlcNAc...) asparagine). Asparagine 296, asparagine 303, asparagine 323, asparagine 355, asparagine 370, asparagine 466, and asparagine 489 each carry an N-linked (GlcNAc...) asparagine glycan. Ig-like C2-type domains follow at residues 324–417 and 420–514; these read TTVF…TKPE and TYDR…FKGN. A disulfide bridge links cysteine 431 with cysteine 494. A helical membrane pass occupies residues 528 to 548; sequence LLIGFVVAAGAMGIIVMVLTY. Residues 549–979 are Cytoplasmic-facing; that stretch reads KYLQKPMYEV…TQPLLVHEDA (431 aa). A phosphotyrosine; by autocatalysis mark is found at tyrosine 550 and tyrosine 556. Tyrosine 571 is a Mg(2+) binding site. Phosphotyrosine is present on residues tyrosine 571 and tyrosine 573. The important for interaction with phosphotyrosine-binding proteins stretch occupies residues 571–573; the sequence is YVY. A Protein kinase domain is found at 592 to 939; it reads LSFGKTLGAG…ISDSTKHIYS (348 aa). Residues 599–606, lysine 626, and 674–680 each bind ATP; these read GAGAFGKV and EYCCYGD. Phosphotyrosine is present on tyrosine 706. Serine 720 is modified (phosphoserine). A phosphotyrosine; by autocatalysis mark is found at tyrosine 723 and tyrosine 732. A phosphoserine; by PKC/PRKCA mark is found at serine 743 and serine 748. The active-site Proton acceptor is the aspartate 794. Arginine 798 is a binding site for ATP. Mg(2+)-binding residues include asparagine 799 and aspartate 812. Position 823 is a phosphoserine (serine 823). Residue tyrosine 825 is modified to Phosphotyrosine; by autocatalysis. Serine 893 is subject to Phosphoserine. Position 902 is a phosphotyrosine; by autocatalysis (tyrosine 902). At tyrosine 938 the chain carries Phosphotyrosine. Residue serine 962 is modified to Phosphoserine.

The protein belongs to the protein kinase superfamily. Tyr protein kinase family. CSF-1/PDGF receptor subfamily. Monomer in the absence of bound KITLG/SCF. Homodimer in the presence of bound KITLG/SCF, forming a heterotetramer with two KITLG/SCF molecules. Interacts (via phosphorylated tyrosine residues) with the adapter proteins GRB2 and GRB7 (via SH2 domain), and SH2B2/APS. Interacts (via C-terminus) with MPDZ (via the tenth PDZ domain). Interacts (via phosphorylated tyrosine residues) with the protein phosphatases PTPN6/SHP-1 (via SH2 domain), PTPN11/SHP-2 (via SH2 domain) and PTPRU. Interacts with DOK1 and TEC. Interacts with the protein kinase FES/FPS. Interacts with PLCG1. Interacts (via phosphorylated tyrosine residues) with PIK3R1 and PIK3 catalytic subunit. Interacts (KITLG/SCF-bound) with IL1RL1. Interacts with IL1RAP (independent of stimulation with KITLG/SCF). A mast cell-specific KITLG/SCF-induced interleukin-33 signaling complex contains IL1RL1, IL1RAP, KIT and MYD88. Ubiquitinated by SOCS6. KIT is rapidly ubiquitinated after autophosphorylation induced by KITLG/SCF binding, leading to internalization and degradation. Post-translationally, autophosphorylated on tyrosine residues. KITLG/SCF binding promotes autophosphorylation of isoform 1 and isoform 2. Isoform 1 shows low levels of tyrosine phosphorylation in the absence of added KITLG/SCF, while isoform 2 requires stimulation by KITLG/SCF for phosphorylation (in vitro). Phosphorylation of Tyr-573 is required for interaction with PTPN6/SHP-1. Phosphorylation of Tyr-571 is required for interaction with PTPN11/SHP-2. Phosphorylated tyrosine residues are important for interaction with specific binding partners. As to expression, isoform 1 and isoform 2 are detected in bone marrow cells, spermatogonia and spermatocytes, but not in round spermatids, elongating spermatids and spermatozoa. Isoform 3 is detected in round spermatids, elongating spermatids and spermatozoa, but not in spermatogonia and spermatocytes (at protein level). Isoform 1 is widely expressed and detected in fetal liver and bone marrow. Isoform 3 is detected in bone marrow cells enriched in hematopoietic stem cells.

The protein resides in the cell membrane. Its subcellular location is the cytoplasm. The enzyme catalyses L-tyrosyl-[protein] + ATP = O-phospho-L-tyrosyl-[protein] + ADP + H(+). Present in an inactive conformation in the absence of bound ligand. KITLG/SCF binding leads to dimerization and activation by autophosphorylation. In terms of biological role, tyrosine-protein kinase that acts as a cell-surface receptor for the cytokine KITLG/SCF and plays an essential role in the regulation of cell survival and proliferation, hematopoiesis, stem cell maintenance, gametogenesis, mast cell development, migration and function, and in melanogenesis. In response to KITLG/SCF binding, KIT can activate several signaling pathways. Phosphorylates PIK3R1, PLCG1, SH2B2/APS and CBL. Activates the AKT1 signaling pathway by phosphorylation of PIK3R1, the regulatory subunit of phosphatidylinositol 3-kinase. Activated KIT also transmits signals via GRB2 and activation of RAS, RAF1 and the MAP kinases MAPK1/ERK2 and/or MAPK3/ERK1. Promotes activation of STAT family members STAT1, STAT3, STAT5A and STAT5B. Activation of PLCG1 leads to the production of the cellular signaling molecules diacylglycerol and inositol 1,4,5-trisphosphate. KIT signaling is modulated by protein phosphatases, and by rapid internalization and degradation of the receptor. Activated KIT promotes phosphorylation of the protein phosphatases PTPN6/SHP-1 and PTPRU, and of the transcription factors STAT1, STAT3, STAT5A and STAT5B. Promotes phosphorylation of PIK3R1, CBL, CRK (isoform Crk-II), LYN, MAPK1/ERK2 and/or MAPK3/ERK1, PLCG1, SRC and SHC1. This chain is Mast/stem cell growth factor receptor Kit (Kit), found in Mus musculus (Mouse).